The following is a 122-amino-acid chain: Serum amyloid A-3 protein (122 aa).

An N-terminal signal peptide occupies residues 1–18; the sequence is MKPFLAIIFCFLILGVDS. The tract at residues 100–122 is disordered; that stretch reads ANKWGRSGKDPNHFRPAGLPSKY.

The protein belongs to the SAA family. As to expression, expressed by the liver; secreted in plasma.

Its subcellular location is the secreted. In terms of biological role, major acute phase reactant. Apolipoprotein of the HDL complex. In vitro exhibits antimicrobial activity against Escherichia coli, Streptococcus uberis and Pseudomonas aeruginosa. This is Serum amyloid A-3 protein (SAA3) from Mesocricetus auratus (Golden hamster).